The following is a 450-amino-acid chain: UDP-N-acetylmuramoylalanine--D-glutamate ligase (450 aa).

119–125 (GSNGKTT) contributes to the ATP binding site.

It belongs to the MurCDEF family.

The protein localises to the cytoplasm. It carries out the reaction UDP-N-acetyl-alpha-D-muramoyl-L-alanine + D-glutamate + ATP = UDP-N-acetyl-alpha-D-muramoyl-L-alanyl-D-glutamate + ADP + phosphate + H(+). It functions in the pathway cell wall biogenesis; peptidoglycan biosynthesis. Its function is as follows. Cell wall formation. Catalyzes the addition of glutamate to the nucleotide precursor UDP-N-acetylmuramoyl-L-alanine (UMA). The sequence is that of UDP-N-acetylmuramoylalanine--D-glutamate ligase from Streptococcus thermophilus (strain ATCC BAA-491 / LMD-9).